The chain runs to 134 residues: uncharacterized protein (134 aa).

Positions 1 to 37 are cleaved as a signal peptide; the sequence is MSYIKRDHTALRDIAMKTFLKVVGLAASLSAASVAFS.

This is an uncharacterized protein from Coxiella burnetii (strain RSA 493 / Nine Mile phase I).